Reading from the N-terminus, the 95-residue chain is Translation initiation factor IF-1 (95 aa).

In terms of domain architecture, S1-like spans 1–72 (MAKEELIEMD…TKARITYRHK (72 aa)). The interval 70–95 (RHKVGGPPGPVTGGGNRPPPRQPRRR) is disordered. The segment covering 86-95 (RPPPRQPRRR) has biased composition (pro residues).

Belongs to the IF-1 family. Component of the 30S ribosomal translation pre-initiation complex which assembles on the 30S ribosome in the order IF-2 and IF-3, IF-1 and N-formylmethionyl-tRNA(fMet); mRNA recruitment can occur at any time during PIC assembly.

The protein localises to the cytoplasm. One of the essential components for the initiation of protein synthesis. Stabilizes the binding of IF-2 and IF-3 on the 30S subunit to which N-formylmethionyl-tRNA(fMet) subsequently binds. Helps modulate mRNA selection, yielding the 30S pre-initiation complex (PIC). Upon addition of the 50S ribosomal subunit IF-1, IF-2 and IF-3 are released leaving the mature 70S translation initiation complex. In Rhodospirillum rubrum (strain ATCC 11170 / ATH 1.1.1 / DSM 467 / LMG 4362 / NCIMB 8255 / S1), this protein is Translation initiation factor IF-1.